Reading from the N-terminus, the 1109-residue chain is Protein argonaute 3 (1109 aa).

The segment covering 1–13 (MAGRGGRDPRRGY) has biased composition (basic and acidic residues). 2 disordered regions span residues 1 to 83 (MAGR…GLVR) and 125 to 220 (DHRD…PLSK). 3 stretches are compositionally biased toward gly residues: residues 14 to 30 (DGGY…GGTN), 37 to 54 (RGGG…GGRG), and 62 to 83 (DVLG…GLVR). Basic and acidic residues predominate over residues 125 to 134 (DHRDQHDHQS). Residues 135–161 (QRHHHRHHHHQRQRHHHHHQRQQRRGS) are compositionally biased toward basic residues. The PAZ domain occupies 411–521 (SVLDLVKTMK…VPIEFCNIPE (111 aa)). Residues 527–545 (VARLDDKKSDNKGEQEKPS) are compositionally biased toward basic and acidic residues. Residues 527–548 (VARLDDKKSDNKGEQEKPSTKT) form a disordered region. The region spanning 720–1023 (LLFCPMLNRC…AAYRGRLYYE (304 aa)) is the Piwi domain.

Belongs to the argonaute family. Ago subfamily.

Its function is as follows. Probably involved in the RNA silencing pathway. May bind to short RNAs such as microRNAs (miRNAs) or short interfering RNAs (siRNAs), and represses the translation of mRNAs which are complementary to them. In Oryza sativa subsp. japonica (Rice), this protein is Protein argonaute 3 (AGO3).